A 620-amino-acid polypeptide reads, in one-letter code: 1-deoxy-D-xylulose-5-phosphate synthase (620 aa).

Residues histidine 80 and 121–123 (GHS) each bind thiamine diphosphate. Aspartate 152 serves as a coordination point for Mg(2+). Residues 153-154 (GA), asparagine 181, tyrosine 288, and glutamate 370 each bind thiamine diphosphate. Residue asparagine 181 participates in Mg(2+) binding.

It belongs to the transketolase family. DXPS subfamily. As to quaternary structure, homodimer. Requires Mg(2+) as cofactor. It depends on thiamine diphosphate as a cofactor.

The catalysed reaction is D-glyceraldehyde 3-phosphate + pyruvate + H(+) = 1-deoxy-D-xylulose 5-phosphate + CO2. Its pathway is metabolic intermediate biosynthesis; 1-deoxy-D-xylulose 5-phosphate biosynthesis; 1-deoxy-D-xylulose 5-phosphate from D-glyceraldehyde 3-phosphate and pyruvate: step 1/1. Functionally, catalyzes the acyloin condensation reaction between C atoms 2 and 3 of pyruvate and glyceraldehyde 3-phosphate to yield 1-deoxy-D-xylulose-5-phosphate (DXP). The protein is 1-deoxy-D-xylulose-5-phosphate synthase of Sodalis glossinidius (strain morsitans).